Reading from the N-terminus, the 315-residue chain is ADP-L-glycero-D-manno-heptose-6-epimerase (315 aa).

NADP(+)-binding positions include 10 to 11 (FI), 31 to 32 (DD), lysine 38, lysine 53, 76 to 80 (QGACS), and asparagine 93. Tyrosine 140 (proton acceptor) is an active-site residue. Lysine 144 is an NADP(+) binding site. Residue asparagine 169 coordinates substrate. Residues valine 170 and lysine 178 each coordinate NADP(+). The active-site Proton acceptor is lysine 178. Residues serine 180, histidine 187, 201 to 204 (FEGC), arginine 214, and tyrosine 278 contribute to the substrate site.

It belongs to the NAD(P)-dependent epimerase/dehydratase family. HldD subfamily. Homopentamer. NADP(+) is required as a cofactor.

It carries out the reaction ADP-D-glycero-beta-D-manno-heptose = ADP-L-glycero-beta-D-manno-heptose. Its pathway is nucleotide-sugar biosynthesis; ADP-L-glycero-beta-D-manno-heptose biosynthesis; ADP-L-glycero-beta-D-manno-heptose from D-glycero-beta-D-manno-heptose 7-phosphate: step 4/4. Functionally, catalyzes the interconversion between ADP-D-glycero-beta-D-manno-heptose and ADP-L-glycero-beta-D-manno-heptose via an epimerization at carbon 6 of the heptose. The polypeptide is ADP-L-glycero-D-manno-heptose-6-epimerase (Syntrophotalea carbinolica (strain DSM 2380 / NBRC 103641 / GraBd1) (Pelobacter carbinolicus)).